The chain runs to 230 residues: Ribonuclease 1 (230 aa).

The signal sequence occupies residues 1 to 22; that stretch reads MKILLASLCLISLLVILPSVFS. Q38 is a binding site for RNA. C44 and C50 are oxidised to a cystine. RNA is bound by residues H65, F115, 118-119, and 122-123; these read HE and KH. Catalysis depends on H65, which acts as the Proton donor. 3 disulfide bridges follow: C80–C126, C186–C221, and C202–C213. Residue E119 is part of the active site. H123 (proton acceptor) is an active-site residue.

It belongs to the RNase T2 family.

It carries out the reaction a ribonucleotidyl-ribonucleotide-RNA + H2O = a 3'-end 3'-phospho-ribonucleotide-RNA + a 5'-end dephospho-ribonucleoside-RNA + H(+). Its function is as follows. May remobilize phosphate, particularly when cells senesce or when phosphate becomes limiting. The chain is Ribonuclease 1 (RNS1) from Arabidopsis thaliana (Mouse-ear cress).